Consider the following 345-residue polypeptide: Tryptophan--tRNA ligase (345 aa).

ATP-binding positions include 21 to 23 (QPT) and 30 to 31 (GN). Positions 22 to 31 (PTADSYHLGN) match the 'HIGH' region motif. Aspartate 147 serves as a coordination point for L-tryptophan. ATP is bound by residues 159–161 (GED), isoleucine 198, and 207–211 (KMSKS). Residues 207 to 211 (KMSKS) carry the 'KMSKS' region motif.

Belongs to the class-I aminoacyl-tRNA synthetase family. Homodimer.

The protein resides in the cytoplasm. It carries out the reaction tRNA(Trp) + L-tryptophan + ATP = L-tryptophyl-tRNA(Trp) + AMP + diphosphate + H(+). Functionally, catalyzes the attachment of tryptophan to tRNA(Trp). This is Tryptophan--tRNA ligase from Corynebacterium glutamicum (strain ATCC 13032 / DSM 20300 / JCM 1318 / BCRC 11384 / CCUG 27702 / LMG 3730 / NBRC 12168 / NCIMB 10025 / NRRL B-2784 / 534).